Consider the following 226-residue polypeptide: Ribosome maturation factor RimP (226 aa).

Residues 190–226 (VFPDTTRPQPGGKTGQRKKAQPKKPARGGAPHDDTTD) are disordered. The segment covering 204-215 (GQRKKAQPKKPA) has biased composition (basic residues).

The protein belongs to the RimP family.

Its subcellular location is the cytoplasm. Required for maturation of 30S ribosomal subunits. The protein is Ribosome maturation factor RimP of Nitratidesulfovibrio vulgaris (strain DSM 19637 / Miyazaki F) (Desulfovibrio vulgaris).